Reading from the N-terminus, the 381-residue chain is Alkanesulfonate monooxygenase (381 aa).

Belongs to the SsuD family. In terms of assembly, homotetramer.

The enzyme catalyses an alkanesulfonate + FMNH2 + O2 = an aldehyde + FMN + sulfite + H2O + 2 H(+). Catalyzes the desulfonation of aliphatic sulfonates. The protein is Alkanesulfonate monooxygenase of Escherichia coli O6:H1 (strain CFT073 / ATCC 700928 / UPEC).